The following is a 327-amino-acid chain: Pyruvate dehydrogenase E1 component subunit beta (327 aa).

E60 contributes to the thiamine diphosphate binding site. I113, A161, I162, and N166 together coordinate K(+).

Heterodimer of an alpha and a beta chain. Thiamine diphosphate is required as a cofactor.

It localises to the plastid. The protein resides in the chloroplast. The catalysed reaction is N(6)-[(R)-lipoyl]-L-lysyl-[protein] + pyruvate + H(+) = N(6)-[(R)-S(8)-acetyldihydrolipoyl]-L-lysyl-[protein] + CO2. Functionally, the pyruvate dehydrogenase complex catalyzes the overall conversion of pyruvate to acetyl-CoA and CO(2). It contains multiple copies of three enzymatic components: pyruvate dehydrogenase (E1), dihydrolipoamide acetyltransferase (E2) and lipoamide dehydrogenase (E3). The polypeptide is Pyruvate dehydrogenase E1 component subunit beta (pdhB) (Mesostigma viride (Green alga)).